The sequence spans 215 residues: Wtf element wtf7 (215 aa).

The segment at 1–21 (MSGSYAPIEDSADELSVHSGN) is disordered. 3 helical membrane passes run 119–139 (LAQSLFLLLPFNFIFFACLFF), 149–169 (LMGWILFGIWCLTCFLSSFIL), and 189–209 (LILFGLLFPGIVTMVVFYALY).

This sequence belongs to the WTF family.

It localises to the spore membrane. In terms of biological role, may act in meiotic drive. The polypeptide is Wtf element wtf7 (Schizosaccharomyces pombe (strain 972 / ATCC 24843) (Fission yeast)).